Consider the following 469-residue polypeptide: SHC-transforming protein 1 (469 aa).

Positions 1-26 (MNKLSGGGGRRTRVEGGQLGGEEWTR) are disordered. Residue Ser-29 is modified to Phosphoserine. Residue Lys-44 is modified to N6-acetyllysine. Residues 46 to 229 (MGPGVSYLVR…AGFDGSAWDE (184 aa)) form the PID domain. Residues 230–373 (EEEELPDHQY…SMAEQLQGES (144 aa)) are CH1. Residues Tyr-239, Tyr-240, and Tyr-313 each carry the phosphotyrosine modification. Residues 322 to 344 (ARQAGGGAGPPNPSVNGSAPRDL) are disordered. Ser-339 is modified (phosphoserine). Positions 374-465 (WFHGKLSRRE…GSELCLQQPV (92 aa)) constitute an SH2 domain.

As to quaternary structure, interacts with CPNE3; this interaction may mediate the binding of CPNE3 with ERBB2. Interacts with the NPXY motif of tyrosine-phosphorylated IGF1R and INSR in vitro via the PID domain. Once activated, binds to GRB2. Interacts with tyrosine-phosphorylated CD3T and DDR2. Interacts with the N-terminal region of APS. Interacts with phosphorylated LRP1 and IRS4. Interacts with INPP5D/SHIP1 and INPPL1/SHIP2. Interacts with ALK, GAB2, GRB7 and KIT. Interacts with PTPN6/SHP (tyrosine phosphorylated). Identified in a complex containing FGFR4, NCAM1, CDH2, PLCG1, FRS2A, SRC, SHC1, GAP43 and CTTN. Interacts with EPHB1 and GRB2; activates the MAPK/ERK cascade to regulate cell migration. Interacts with PDGFRB (tyrosine-phosphorylated). Interacts with ERBB4. Interacts with TEK/TIE2 (tyrosine-phosphorylated). Interacts with PTK2/FAK1. Interacts with FLT4 (tyrosine-phosphorylated). Interacts with the Trk receptors NTRK1, NTRK2 and NTRK3; in a phosphotyrosine-dependent manner. Interacts with CEACAM1; this interaction is CEACAM1-phosphorylation-dependent and mediates interaction with EGFR or INSR resulting in decrease coupling of SHC1 to the MAPK3/ERK1-MAPK1/ERK2 pathway. Interacts (via PID domain) with PEAK1 (when phosphorylated). Found in a complex with PPP1CA, PPP1CC, SHC1 and PEAK1. Post-translationally, phosphorylated by activated epidermal growth factor receptor. Phosphorylated in response to KIT signaling. Tyrosine phosphorylated in response to FLT3 signaling and by ligand-activated ALK. Tyrosine phosphorylated by TEK/TIE2. Tyrosine phosphorylated by ligand-activated PDGFRB. May be tyrosine phosphorylated by activated PTK2/FAK1. Dephosphorylation by PTPN2 may regulate interaction with GRB2. Phosphorylated in response to FLT4 signaling. Tyrosine phosphorylated by activated PTK2B/PYK2.

Its subcellular location is the cytoplasm. The protein resides in the cell junction. It is found in the focal adhesion. In terms of biological role, signaling adapter that couples activated growth factor receptors to signaling pathways. Participates in a signaling cascade initiated by activated KIT and KITLG/SCF. Participates in signaling downstream of the angiopoietin receptor TEK/TIE2, and plays a role in the regulation of endothelial cell migration and sprouting angiogenesis. The polypeptide is SHC-transforming protein 1 (Shc1) (Rattus norvegicus (Rat)).